A 419-amino-acid polypeptide reads, in one-letter code: Probable serine/threonine-protein kinase DDB_G0290859 (419 aa).

One can recognise a Protein kinase domain in the interval Tyr-40–Phe-387. ATP is bound by residues Ile-46 to Val-54 and Lys-69. Asp-173 acts as the Proton acceptor in catalysis. The 32-residue stretch at Glu-388–Asn-419 folds into the AGC-kinase C-terminal domain.

It belongs to the protein kinase superfamily. AGC Ser/Thr protein kinase family.

It carries out the reaction L-seryl-[protein] + ATP = O-phospho-L-seryl-[protein] + ADP + H(+). The catalysed reaction is L-threonyl-[protein] + ATP = O-phospho-L-threonyl-[protein] + ADP + H(+). The protein is Probable serine/threonine-protein kinase DDB_G0290859 of Dictyostelium discoideum (Social amoeba).